A 129-amino-acid polypeptide reads, in one-letter code: MSTFAFLLLCVQACLIQNVYGQCLGRGLGGCGCGGGLGGYGLGYGLGGYGGGYGYGGYGGGYYGGYGGEGVGNVGVAGVLPVGGVTAVGGRVPIIGGVEFGGPACAGGCVSICGHCAPTCGCGYGGLYY.

The first 21 residues, 1-21 (MSTFAFLLLCVQACLIQNVYG), serve as a signal peptide directing secretion. The segment at 22–64 (QCLGRGLGGCGCGGGLGGYGLGYGLGGYGGGYGYGGYGGGYYG) is left arm. Residues 65 to 112 (GYGGEGVGNVGVAGVLPVGGVTAVGGRVPIIGGVEFGGPACAGGCVSI) are central domain. A right arm region spans residues 113–129 (CGHCAPTCGCGYGGLYY).

It belongs to the chorion protein family.

This protein is one of many from the eggshell of the silk moth. The polypeptide is Chorion class A protein L11 (Bombyx mori (Silk moth)).